We begin with the raw amino-acid sequence, 390 residues long: Phosphopentomutase (390 aa).

The Mn(2+) site is built by Asp-11, Asp-283, His-288, Asp-324, His-325, and His-336.

It belongs to the phosphopentomutase family. It depends on Mn(2+) as a cofactor.

The protein resides in the cytoplasm. The catalysed reaction is 2-deoxy-alpha-D-ribose 1-phosphate = 2-deoxy-D-ribose 5-phosphate. It carries out the reaction alpha-D-ribose 1-phosphate = D-ribose 5-phosphate. It functions in the pathway carbohydrate degradation; 2-deoxy-D-ribose 1-phosphate degradation; D-glyceraldehyde 3-phosphate and acetaldehyde from 2-deoxy-alpha-D-ribose 1-phosphate: step 1/2. Its function is as follows. Isomerase that catalyzes the conversion of deoxy-ribose 1-phosphate (dRib-1-P) and ribose 1-phosphate (Rib-1-P) to deoxy-ribose 5-phosphate (dRib-5-P) and ribose 5-phosphate (Rib-5-P), respectively. This Alkaliphilus oremlandii (strain OhILAs) (Clostridium oremlandii (strain OhILAs)) protein is Phosphopentomutase.